A 319-amino-acid chain; its full sequence is 1-aminocyclopropane-1-carboxylate oxidase (319 aa).

In terms of domain architecture, Fe2OG dioxygenase spans 153–253 (PTFGTKVSNY…RMSIASFYNP (101 aa)). The Fe cation site is built by His177, Asp179, and His234.

This sequence belongs to the iron/ascorbate-dependent oxidoreductase family. It depends on Fe cation as a cofactor.

It carries out the reaction 1-aminocyclopropane-1-carboxylate + L-ascorbate + O2 = ethene + L-dehydroascorbate + hydrogen cyanide + CO2 + 2 H2O. The protein operates within alkene biosynthesis; ethylene biosynthesis via S-adenosyl-L-methionine; ethylene from S-adenosyl-L-methionine: step 2/2. The chain is 1-aminocyclopropane-1-carboxylate oxidase (ACO1) from Prunus mume (Japanese apricot).